The following is a 280-amino-acid chain: Ribosomal RNA-processing protein 7 homolog A (280 aa).

The RRM domain maps to 59-159 (RTLFVLNVPP…SGIHKWISDY (101 aa)). Ser99 carries the post-translational modification Phosphoserine.

This sequence belongs to the RRP7 family. In terms of assembly, part of the small subunit (SSU) processome, composed of more than 70 proteins and the RNA chaperone small nucleolar RNA (snoRNA) U3. Interacts with NOL6; required for NOL6 localization to nucleolus. Expressed in the apical radial glial cells in the developing brain.

Its subcellular location is the nucleus. It localises to the nucleolus. The protein resides in the cell projection. It is found in the cilium. The protein localises to the cytoplasm. Its subcellular location is the cytoskeleton. It localises to the microtubule organizing center. The protein resides in the centrosome. Nucleolar protein that is involved in ribosomal RNA (rRNA) processing. Also plays a role in primary cilia resorption, and cell cycle progression in neurogenesis and neocortex development. Part of the small subunit (SSU) processome, first precursor of the small eukaryotic ribosomal subunit. During the assembly of the SSU processome in the nucleolus, many ribosome biogenesis factors, an RNA chaperone and ribosomal proteins associate with the nascent pre-rRNA and work in concert to generate RNA folding, modifications, rearrangements and cleavage as well as targeted degradation of pre-ribosomal RNA by the RNA exosome. The protein is Ribosomal RNA-processing protein 7 homolog A of Homo sapiens (Human).